Reading from the N-terminus, the 307-residue chain is MTSAQNESQALGDLAAGQLANATKTVPQLSTITPRWLLHLLNWVPVEAGVYRVNRVVNPERVAVKAEAGAGTEAPLPETFVDYETSPREYTLRTISTLLDIHTRVSDLYSSPHDQITQQLRLTIETIKERQECELVNSPEFGLLAQVTPEQTIRTFAGAPTPDDLDALITKVWKMPSFFLTHPQGIAAFGREATYRGVPPVVVSLFGAQFITWRGIPLIPSDKVPVQDGETKFILVRTGEERQGVVGLFQPGLVGEQAPGLSVRFTGINQAAIATYLVTLYTSLAVLTDDALAVLDNVAVDQFHEYK.

Belongs to the encapsulin family. Family 2A subfamily. As to quaternary structure, homooligomeric. The encapsulin nanocompartment is formed by 60 subunits; monomers form pentamers which assemble to form shells. There are 12 charged pores where the pentamers meet as well as 3-fold axis channels and dimer channels. In terms of processing, the N-terminus is blocked.

It localises to the encapsulin nanocompartment. It is found in the cytoplasm. Its subcellular location is the cytosol. The protein resides in the cell membrane. Shell component of a type 2A encapsulin nanocompartment. Forms encapsulin nanocompartments about 24 nm in diameter from 60 monomers. Probably encapsulates at least cysteine desulfurase (CyD, AC O32975) and allows passage of cysteine into its interior, probably involved in sulfur metabolism. Expression in M.smegmatis generates a multimeric protein, whereas expression in E.coli does not. The polypeptide is Type 2A encapsulin shell protein (Mycobacterium leprae (strain TN)).